Reading from the N-terminus, the 422-residue chain is Blood group Rh(D) polypeptide (422 aa).

Transmembrane regions (helical) follow at residues 13 to 33 (LPLW…FLIG), 43 to 63 (FMAI…GFGF), 76 to 96 (VAFS…LDYF), 113 to 135 (FLSI…AVLG), 137 to 159 (VNLV…IRVA), 170 to 190 (IIMM…AWWL), 215 to 235 (LFAM…NSAL), 244 to 266 (AVFN…SALS), 272 to 292 (INMV…GAPS), 294 to 314 (LISS…ISIW), 335 to 355 (YTFG…HIIA), and 372 to 392 (VGAL…TGCL).

This sequence belongs to the ammonium transporter (TC 2.A.49) family. Rh subfamily. Post-translationally, palmitoylated.

It localises to the cell membrane. Functionally, may be part of an oligomeric complex which is likely to have a transport or channel function in the erythrocyte membrane. This Rattus norvegicus (Rat) protein is Blood group Rh(D) polypeptide (Rhd).